A 54-amino-acid chain; its full sequence is Large ribosomal subunit protein bL33 (54 aa).

The protein belongs to the bacterial ribosomal protein bL33 family.

This Roseiflexus castenholzii (strain DSM 13941 / HLO8) protein is Large ribosomal subunit protein bL33.